We begin with the raw amino-acid sequence, 648 residues long: Biosynthetic arginine decarboxylase (648 aa).

Position 109 is an N6-(pyridoxal phosphate)lysine (Lys109). 291-301 (IDVGGGLGIDF) is a binding site for substrate.

Belongs to the Orn/Lys/Arg decarboxylase class-II family. SpeA subfamily. The cofactor is Mg(2+). Pyridoxal 5'-phosphate is required as a cofactor.

It catalyses the reaction L-arginine + H(+) = agmatine + CO2. The protein operates within amine and polyamine biosynthesis; agmatine biosynthesis; agmatine from L-arginine: step 1/1. Functionally, catalyzes the biosynthesis of agmatine from arginine. This chain is Biosynthetic arginine decarboxylase, found in Prochlorococcus marinus (strain MIT 9515).